Consider the following 908-residue polypeptide: MLGLGTLARKIFGTPNDRKVKSVRSLVARINDLEPEFQALSDEGIKQKTAEFQRRVQEGGESLDDLLPEAFANCREGARRALGLRAFDVQLMGGIFLHQGNIAEMKTGEGKTLVATFPAYLNALAGKGVHVVTVNDYLAKRDAEWMGKVYAQLGLATGVVYPFQSDEEKKAAYAADITYATNNELGFDYLRDNMKASKEEMRQRGHFFAIVDEVDSILIDEARTPLIISGPSQDRSDLYTKVDKLIPELVEEHYKLDEKTRNVTFTEEGNEFLEKRLLETGLLPEGQSLYDPESTTIVHHVNQGLRAHKLFNRDQQYIVRDDEIMLIDEFTGRMMRGRRLSDGLHQAIEAKEGVSIQPENVTLASVTFQNYFRLYEKLGGMTGTAATEAEEFMEIYGLGVVEVPTNRPVARADEHDAVYRTAREKHDGIVASIKDAHERGQPILVGTTSIDKSEALSDLLKSAGIPHNVLNARQHEQEAQIVADAGKLGAVTIATNMAGRGTDIQLGGNVEMKVMQALAADPAAHPDEVRARIEAEHAEEKERVKEAGGLFVLGTERHESRRIDNQLRGRSGRQGDPGRSAFFLSLEDDLMRIFGSDRLDKVLSTLGMKEGEAIVHPWVNKSLEKAQAKVEARNFDIRKQLLKFDDVMNDQRKAIFSQRLEIMETEDLSEIAQDMRYQVIDDLIDQHMPPRSYADQWDIEGMHRAVQDKLGLDAPLAKWAQEEGVDQDVVRERLCEASDRQMTEKAEAFGPETMRSIEKQILLQTIDAKWREHLLTLEHLRSVVGFRGYAQRDPLSEYKTEAFALFESMLNSLRQDVTQKLAQVRPLSEEEQQAMMRQFLDQQRAAAAAEAPVAPAPQPAAAAPQPTPELVGAEAGEPDPAAWGNVARNDPCPCGSGLKYKHCHGRLD.

Residues Gln-90, 108–112, and Asp-503 each bind ATP; that span reads GEGKT. The span at 846–864 shows a compositional bias: low complexity; sequence AAAAEAPVAPAPQPAAAAP. Residues 846–884 form a disordered region; the sequence is AAAAEAPVAPAPQPAAAAPQPTPELVGAEAGEPDPAAWG. The Zn(2+) site is built by Cys-892, Cys-894, Cys-903, and His-904.

Belongs to the SecA family. As to quaternary structure, monomer and homodimer. Part of the essential Sec protein translocation apparatus which comprises SecA, SecYEG and auxiliary proteins SecDF-YajC and YidC. Zn(2+) is required as a cofactor.

It localises to the cell inner membrane. The protein resides in the cytoplasm. The enzyme catalyses ATP + H2O + cellular proteinSide 1 = ADP + phosphate + cellular proteinSide 2.. Functionally, part of the Sec protein translocase complex. Interacts with the SecYEG preprotein conducting channel. Has a central role in coupling the hydrolysis of ATP to the transfer of proteins into and across the cell membrane, serving both as a receptor for the preprotein-SecB complex and as an ATP-driven molecular motor driving the stepwise translocation of polypeptide chains across the membrane. The sequence is that of Protein translocase subunit SecA from Cereibacter sphaeroides (strain KD131 / KCTC 12085) (Rhodobacter sphaeroides).